The following is a 365-amino-acid chain: tRNA 2-selenouridine synthase (365 aa).

One can recognise a Rhodanese domain in the interval 15–138; the sequence is FVNDHPIMDA…MRQFLIETID (124 aa). The S-selanylcysteine intermediate role is filled by Cys-98.

It belongs to the SelU family. In terms of assembly, monomer.

It catalyses the reaction 5-methylaminomethyl-2-thiouridine(34) in tRNA + selenophosphate + (2E)-geranyl diphosphate + H2O + H(+) = 5-methylaminomethyl-2-selenouridine(34) in tRNA + (2E)-thiogeraniol + phosphate + diphosphate. It carries out the reaction 5-methylaminomethyl-2-thiouridine(34) in tRNA + (2E)-geranyl diphosphate = 5-methylaminomethyl-S-(2E)-geranyl-thiouridine(34) in tRNA + diphosphate. The catalysed reaction is 5-methylaminomethyl-S-(2E)-geranyl-thiouridine(34) in tRNA + selenophosphate + H(+) = 5-methylaminomethyl-2-(Se-phospho)selenouridine(34) in tRNA + (2E)-thiogeraniol. The enzyme catalyses 5-methylaminomethyl-2-(Se-phospho)selenouridine(34) in tRNA + H2O = 5-methylaminomethyl-2-selenouridine(34) in tRNA + phosphate. Involved in the post-transcriptional modification of the uridine at the wobble position (U34) of tRNA(Lys), tRNA(Glu) and tRNA(Gln). Catalyzes the conversion of 2-thiouridine (S2U-RNA) to 2-selenouridine (Se2U-RNA). Acts in a two-step process involving geranylation of 2-thiouridine (S2U) to S-geranyl-2-thiouridine (geS2U) and subsequent selenation of the latter derivative to 2-selenouridine (Se2U) in the tRNA chain. The protein is tRNA 2-selenouridine synthase of Shewanella halifaxensis (strain HAW-EB4).